A 366-amino-acid chain; its full sequence is Ubiquitin carboxyl-terminal hydrolase 46 (366 aa).

The 331-residue stretch at 35–365 folds into the USP domain; the sequence is FGLVNFGNTC…SGYILFYQSR (331 aa). Residue C44 is the Nucleophile of the active site. Residues C182, C185, C229, and C232 each coordinate Zn(2+). Catalysis depends on H313, which acts as the Proton acceptor.

It belongs to the peptidase C19 family. USP12/USP46 subfamily. As to quaternary structure, interacts with WDR48. Interacts with WDR20. Interacts with DMWD. Component of the USP46/WDR20/WDR48 deubiquitinating complex. In terms of tissue distribution, broadly expressed.

The protein localises to the cytoplasm. It carries out the reaction Thiol-dependent hydrolysis of ester, thioester, amide, peptide and isopeptide bonds formed by the C-terminal Gly of ubiquitin (a 76-residue protein attached to proteins as an intracellular targeting signal).. Its activity is regulated as follows. Activated by interaction with WDR48. Deubiquitinating enzyme that plays a role in behavior, possibly by regulating GABA action. May act by mediating the deubiquitination of GAD1/GAD67. Has almost no deubiquitinating activity by itself and requires the interaction with WDR48 to have a high activity. Not involved in deubiquitination of monoubiquitinated FANCD2. In Homo sapiens (Human), this protein is Ubiquitin carboxyl-terminal hydrolase 46 (USP46).